The sequence spans 412 residues: uncharacterized protein (412 aa).

The first 21 residues, 1–21 (MIIPMLRILLIVLFVLNLVTS), serve as a signal peptide directing secretion. Disordered stretches follow at residues 85–134 (QPPA…STTT), 250–294 (STTE…TPGT), and 327–357 (VELGEGDDDEENDDDSSEEEETKPPARHVRE). Over residues 88–105 (ASLTSLPAAPPSAQVAPP) the composition is skewed to low complexity. Positions 124–134 (TPQASISSTTT) are enriched in polar residues. Low complexity-rich tracts occupy residues 250–259 (STTENTTEQS) and 266–293 (TTSTYSTTTTAPVNTTSAPTTTHLGTPG). Positions 330-347 (GEGDDDEENDDDSSEEEE) are enriched in acidic residues. The segment covering 348 to 357 (TKPPARHVRE) has biased composition (basic and acidic residues). In terms of domain architecture, ShKT spans 371 to 408 (CDEEEDDKGKICKLWAAGGLCGTHKPTMFLFCRKTCLC).

This is an uncharacterized protein from Caenorhabditis elegans.